The following is a 121-amino-acid chain: Large ribosomal subunit protein uL14 (121 aa).

The protein belongs to the universal ribosomal protein uL14 family. As to quaternary structure, part of the 50S ribosomal subunit. Forms a cluster with proteins L3 and L19. In the 70S ribosome, L14 and L19 interact and together make contacts with the 16S rRNA in bridges B5 and B8.

Functionally, binds to 23S rRNA. Forms part of two intersubunit bridges in the 70S ribosome. The polypeptide is Large ribosomal subunit protein uL14 (Aquifex aeolicus (strain VF5)).